We begin with the raw amino-acid sequence, 419 residues long: Glutamyl-tRNA reductase (419 aa).

Substrate contacts are provided by residues 49 to 52 (TCNR), Ser107, 112 to 114 (EPQ), and Gln118. Cys50 (nucleophile) is an active-site residue. NADP(+) is bound at residue 187–192 (GAGETI).

This sequence belongs to the glutamyl-tRNA reductase family. Homodimer.

It catalyses the reaction (S)-4-amino-5-oxopentanoate + tRNA(Glu) + NADP(+) = L-glutamyl-tRNA(Glu) + NADPH + H(+). It participates in porphyrin-containing compound metabolism; protoporphyrin-IX biosynthesis; 5-aminolevulinate from L-glutamyl-tRNA(Glu): step 1/2. Functionally, catalyzes the NADPH-dependent reduction of glutamyl-tRNA(Glu) to glutamate 1-semialdehyde (GSA). The chain is Glutamyl-tRNA reductase from Vibrio atlanticus (strain LGP32) (Vibrio splendidus (strain Mel32)).